Consider the following 100-residue polypeptide: Small ribosomal subunit protein uS14 (100 aa).

It belongs to the universal ribosomal protein uS14 family. As to quaternary structure, part of the 30S ribosomal subunit. Contacts proteins S3 and S10.

In terms of biological role, binds 16S rRNA, required for the assembly of 30S particles and may also be responsible for determining the conformation of the 16S rRNA at the A site. This is Small ribosomal subunit protein uS14 from Rippkaea orientalis (strain PCC 8801 / RF-1) (Cyanothece sp. (strain PCC 8801)).